A 598-amino-acid polypeptide reads, in one-letter code: UvrABC system protein C (598 aa).

In terms of domain architecture, GIY-YIG spans 14–91; sequence DSPGCYLHKD…IQKNMPKYNI (78 aa). One can recognise a UVR domain in the interval 196–231; that stretch reads DKIIEDLRSKMLAASEEMAFERAAEYRDLISGIATM.

This sequence belongs to the UvrC family. Interacts with UvrB in an incision complex.

Its subcellular location is the cytoplasm. Functionally, the UvrABC repair system catalyzes the recognition and processing of DNA lesions. UvrC both incises the 5' and 3' sides of the lesion. The N-terminal half is responsible for the 3' incision and the C-terminal half is responsible for the 5' incision. The chain is UvrABC system protein C from Streptococcus pyogenes serotype M28 (strain MGAS6180).